Here is a 260-residue protein sequence, read N- to C-terminus: Putative ABC transporter ATP-binding protein PF0068 (260 aa).

An ABC transporter domain is found at 2 to 234 (IEVKGVWFWY…DLKRYKLEEP (233 aa)). An ATP-binding site is contributed by 34–41 (GPNGSGKT).

This sequence belongs to the ABC transporter superfamily.

It localises to the cell membrane. Functionally, probably part of an ABC transporter complex. Responsible for energy coupling to the transport system. The polypeptide is Putative ABC transporter ATP-binding protein PF0068 (Pyrococcus furiosus (strain ATCC 43587 / DSM 3638 / JCM 8422 / Vc1)).